Reading from the N-terminus, the 160-residue chain is Sulfur-rich protein (160 aa).

A run of 2 helical transmembrane segments spans residues 63 to 83 (ITMI…TFVL) and 92 to 112 (FLFL…SVFM).

Its subcellular location is the membrane. The chain is Sulfur-rich protein (srp) from Chlamydia abortus (strain DSM 27085 / S26/3) (Chlamydophila abortus).